The chain runs to 489 residues: Betaine aldehyde dehydrogenase (489 aa).

Thr26 and Asp93 together coordinate K(+). 150–152 (GAW) serves as a coordination point for NAD(+). Lys162 functions as the Charge relay system in the catalytic mechanism. 176 to 179 (KPSE) contacts NAD(+). Val180 is a K(+) binding site. NAD(+) is bound at residue 229-232 (GVET). Residue Leu245 participates in K(+) binding. Residue Glu251 is the Proton acceptor of the active site. Positions 253, 285, and 386 each coordinate NAD(+). The Nucleophile role is filled by Cys285. Cys285 carries the cysteine sulfenic acid (-SOH) modification. Residues Lys456 and Gly459 each contribute to the K(+) site. Glu463 serves as the catalytic Charge relay system.

Belongs to the aldehyde dehydrogenase family. As to quaternary structure, dimer of dimers. The cofactor is K(+).

It catalyses the reaction betaine aldehyde + NAD(+) + H2O = glycine betaine + NADH + 2 H(+). It functions in the pathway amine and polyamine biosynthesis; betaine biosynthesis via choline pathway; betaine from betaine aldehyde: step 1/1. Its function is as follows. Involved in the biosynthesis of the osmoprotectant glycine betaine. Catalyzes the irreversible oxidation of betaine aldehyde to the corresponding acid. This is Betaine aldehyde dehydrogenase from Burkholderia ambifaria (strain MC40-6).